Here is a 120-residue protein sequence, read N- to C-terminus: Large ribosomal subunit protein uL22 (120 aa).

Belongs to the universal ribosomal protein uL22 family. In terms of assembly, part of the 50S ribosomal subunit.

In terms of biological role, this protein binds specifically to 23S rRNA; its binding is stimulated by other ribosomal proteins, e.g. L4, L17, and L20. It is important during the early stages of 50S assembly. It makes multiple contacts with different domains of the 23S rRNA in the assembled 50S subunit and ribosome. The globular domain of the protein is located near the polypeptide exit tunnel on the outside of the subunit, while an extended beta-hairpin is found that lines the wall of the exit tunnel in the center of the 70S ribosome. The chain is Large ribosomal subunit protein uL22 from Corynebacterium aurimucosum (strain ATCC 700975 / DSM 44827 / CIP 107346 / CN-1) (Corynebacterium nigricans).